A 61-amino-acid chain; its full sequence is Short neurotoxin 2 (61 aa).

Disulfide bonds link Cys-3–Cys-23, Cys-17–Cys-40, Cys-42–Cys-53, and Cys-54–Cys-59.

The protein belongs to the three-finger toxin family. Short-chain subfamily. Type I alpha-neurotoxin sub-subfamily. Expressed by the venom gland.

It localises to the secreted. Functionally, binds to muscle nicotinic acetylcholine receptor (nAChR) and inhibit acetylcholine from binding to the receptor, thereby impairing neuromuscular transmission. The polypeptide is Short neurotoxin 2 (Naja haje haje (Egyptian cobra)).